A 191-amino-acid polypeptide reads, in one-letter code: MPSENPIGKTMKSIDEQSLHNARRLFESGDIDRIEVGTTAGLQQIHRYLFGGLYDFAGQIREDNISKGGFRFANAMYLKEALVKIEQMPERTFEEIIAKYVEMNIAHPFLEGNGRSTRIWLDLVLKKNLKKVVNWQNVSKTLYLQAMERSPVNDLELRFLLKDNLTDDVDNREIIFKGIEQSYYYEGYEKG.

One can recognise a Fido domain in the interval 37–162; sequence GTTAGLQQIH…NDLELRFLLK (126 aa). Residues Lys67, 104–107, 112–118, and 140–143 each bind ATP; these read NIAH, GNGRSTR, and KTLY. Positions 182-187 match the Inhibitory (S/T)XXXE(G/N) motif motif; sequence SYYYEG. Tyr183 is subject to O-AMP-tyrosine; in vitro. Glu186 serves as a coordination point for ATP.

Homodimer. In terms of processing, auto-AMPylation at Tyr-183 in vitro.

The enzyme catalyses L-tyrosyl-[protein] + ATP = O-(5'-adenylyl)-L-tyrosyl-[protein] + diphosphate. The catalysed reaction is L-threonyl-[protein] + ATP = 3-O-(5'-adenylyl)-L-threonyl-[protein] + diphosphate. With respect to regulation, adenylyltransferase activity is inhibited by the inhibitory helix present at the C-terminus: Glu-186 binds ATP and competes with ATP-binding at Arg-118, thereby preventing adenylyltransferase activity. Activation dissociates ATP-binding from Glu-186, allowing ordered binding of the entire ATP moiety with the alpha-phosphate in an orientation that is productive for accepting an incoming target hydroxyl side chain. Functionally, adenylyltransferase that mediates the addition of adenosine 5'-monophosphate (AMP) to specific residues of target proteins. The protein is Protein adenylyltransferase NmFic of Neisseria meningitidis serogroup B (strain ATCC BAA-335 / MC58).